A 316-amino-acid polypeptide reads, in one-letter code: Ribosomal RNA large subunit methyltransferase F (316 aa).

The protein belongs to the methyltransferase superfamily. METTL16/RlmF family.

The protein resides in the cytoplasm. The enzyme catalyses adenosine(1618) in 23S rRNA + S-adenosyl-L-methionine = N(6)-methyladenosine(1618) in 23S rRNA + S-adenosyl-L-homocysteine + H(+). Functionally, specifically methylates the adenine in position 1618 of 23S rRNA. This chain is Ribosomal RNA large subunit methyltransferase F, found in Pseudomonas putida (strain GB-1).